Here is a 534-residue protein sequence, read N- to C-terminus: Allene oxide synthase 1, chloroplastic (534 aa).

Disordered regions lie at residues 1–31 (MASTSLSLPSLKLQFPSHTSSSSRKNSSSYR) and 43–71 (EIPPYISSPSQSPSSSSSPPVKQAKLPAQ). A chloroplast-targeting transit peptide spans 1–69 (MASTSLSLPS…SPPVKQAKLP (69 aa)). Composition is skewed to low complexity over residues 17–31 (SHTSSSSRKNSSSYR) and 43–62 (EIPPYISSPSQSPSSSSSPP). Heme b is bound by residues Lys-149, His-180, and Lys-184. Residues Asn-337 and Lys-343 each coordinate (13S)-hydroperoxy-(9Z,11E)-octadecadienoate. Asn-337 provides a ligand contact to (13S)-hydroperoxy-(9Z,11E,15Z)-octadecatrienoate. Residues Lys-485 and Cys-487 each coordinate heme b.

Belongs to the cytochrome P450 family. It depends on heme b as a cofactor. In terms of tissue distribution, expressed in flowers. Detected in stems and roots, but not in leaves and fruits under non-inducing conditions.

It localises to the plastid. Its subcellular location is the chloroplast. The catalysed reaction is (13S)-hydroperoxy-(9Z,11E,15Z)-octadecatrienoate = (9Z,13S,15Z)-12,13-epoxyoctadeca-9,11,15-trienoate + H2O. The enzyme catalyses (13S)-hydroperoxy-(9Z,11E)-octadecadienoate = (9Z,13S)-12,13-epoxyoctadeca-9,11-dienoate + H2O. Its function is as follows. Cytochrome P450 of the CYP74A subfamily involved in the biosynthesis of jasmonic acid from lipoxygenase-derived hydroperoxides of free fatty acids. Catalyzes the synthesis of unstable allene oxide, which is further converted spontaneously by hydrolysis or cyclization. Can use 13S-hydroperoxy-9(Z),11(E),15(Z)-octadecatrienoic acid (13-HPOT) and 13S-hydroperoxy-9(Z),11(E)-octadecadienoic acid (13-HPOD) as substrates. The polypeptide is Allene oxide synthase 1, chloroplastic (Solanum lycopersicum (Tomato)).